We begin with the raw amino-acid sequence, 141 residues long: Large ribosomal subunit protein uL11 (141 aa).

The protein belongs to the universal ribosomal protein uL11 family. Part of the ribosomal stalk of the 50S ribosomal subunit. Interacts with L10 and the large rRNA to form the base of the stalk. L10 forms an elongated spine to which L12 dimers bind in a sequential fashion forming a multimeric L10(L12)X complex. In terms of processing, one or more lysine residues are methylated.

Functionally, forms part of the ribosomal stalk which helps the ribosome interact with GTP-bound translation factors. This chain is Large ribosomal subunit protein uL11, found in Chlorobaculum parvum (strain DSM 263 / NCIMB 8327) (Chlorobium vibrioforme subsp. thiosulfatophilum).